Here is a 461-residue protein sequence, read N- to C-terminus: A-type ATP synthase subunit B (461 aa).

The protein belongs to the ATPase alpha/beta chains family. Has multiple subunits with at least A(3), B(3), C, D, E, F, H, I and proteolipid K(x).

The protein resides in the cell membrane. In terms of biological role, component of the A-type ATP synthase that produces ATP from ADP in the presence of a proton gradient across the membrane. The B chain is a regulatory subunit. The protein is A-type ATP synthase subunit B of Nitrosopumilus maritimus (strain SCM1).